The primary structure comprises 1241 residues: Sterol 3-beta-glucosyltransferase (1241 aa).

A compositionally biased stretch (acidic residues) spans 1–11 (MSGIESTEEPC). Disordered stretches follow at residues 1 to 97 (MSGI…KPSI) and 124 to 189 (DQQV…TLRK). Residues 25–34 (PEERQTRKDS) are compositionally biased toward basic and acidic residues. The segment covering 136–155 (ESEDQQADESSDEQEDDDQD) has biased composition (acidic residues). In terms of domain architecture, GRAM 1 spans 220–267 (NKLKRTFDISDTDVFISDYPCWLMGDVLLQGHLYITKHHILFFAFLPK). In terms of domain architecture, PH spans 271–373 (SISKSGALTT…WVSSLKKHIF (103 aa)). Residues 499 to 556 (DDFSQEQESAESSKPVSDDEIVSADDNQELEEKQPQDNLANAEKENHDKVSRANSRRT) are disordered. Acidic residues predominate over residues 516-527 (DDEIVSADDNQE). Over residues 540–549 (AEKENHDKVS) the composition is skewed to basic and acidic residues. Positions 609 to 675 (ERFRKHFSLT…SDIENVNKEK (67 aa)) constitute a GRAM 2 domain. Residues 720–741 (KGSTDSSPPNASEGSSDESCNL) form a disordered region. The span at 723-741 (TDSSPPNASEGSSDESCNL) shows a compositional bias: polar residues. The UDP-alpha-D-glucose site is built by serine 797, arginine 798, aspartate 800, asparagine 1071, valine 1098, histidine 1100, histidine 1113, serine 1116, glycine 1117, threonine 1118, aspartate 1137, and glutamine 1138.

The protein belongs to the glycosyltransferase 28 family.

Its subcellular location is the cytoplasm. It is found in the preautophagosomal structure membrane. It catalyses the reaction a sterol + UDP-alpha-D-glucose = a sterol 3-beta-D-glucoside + UDP + H(+). The enzyme catalyses ergosterol + UDP-alpha-D-glucose = ergosteryl 3-beta-D-glucoside + UDP + H(+). In terms of biological role, sterol glycosyltransferase responsible for the glycosylation of ergosterol to form ergosterol-glucoside. Mediates autophagic degradation of peroxisomes (pexophagy). This chain is Sterol 3-beta-glucosyltransferase, found in Pichia angusta (Yeast).